Reading from the N-terminus, the 253-residue chain is UPF0246 protein Swit_4565 (253 aa).

It belongs to the UPF0246 family.

This chain is UPF0246 protein Swit_4565, found in Rhizorhabdus wittichii (strain DSM 6014 / CCUG 31198 / JCM 15750 / NBRC 105917 / EY 4224 / RW1) (Sphingomonas wittichii).